Consider the following 173-residue polypeptide: Globin-like host-protective antigen (173 aa).

The signal sequence occupies residues 1-15 (MRFLLLAAFVAYAYA). The Globin domain maps to 25–166 (ALSALDVVPL…FNDEAQKQLA (142 aa)). Residue His114 participates in heme b binding.

Belongs to the globin family.

Its subcellular location is the secreted. It is found in the extracellular space. In terms of biological role, may be a globin and may play a role in oxygen transport. In Trichostrongylus colubriformis (Black scour worm), this protein is Globin-like host-protective antigen.